Here is a 57-residue protein sequence, read N- to C-terminus: Andropin (57 aa).

The N-terminal stretch at 1–23 (MKYFVVLVVLALILAISVGPSDA) is a signal peptide.

Belongs to the andropin family. In terms of tissue distribution, ejaculatory duct of adult males.

Its subcellular location is the secreted. Functionally, male-specific peptide with moderate activity against Gram-positive bacteria. The chain is Andropin (Anp) from Drosophila melanogaster (Fruit fly).